Consider the following 539-residue polypeptide: uncharacterized protein (539 aa).

The tract at residues 34-63 (AASEVSPIPQERPTTSLRKPTPRVQRPATD) is disordered. The next 11 membrane-spanning stretches (helical) occupy residues 103-123 (FATP…TTVF), 141-161 (MTAT…LDTV), 184-204 (ILLL…GILL), 244-264 (GIFH…IFLN), 277-299 (FLGA…IIYI), 325-345 (LAVP…LVTF), 360-380 (VLST…AAAA), 399-419 (THVS…ILFL), 434-454 (VVAL…ADNT), 470-490 (IGGV…AIIL), and 496-516 (WGLY…AGVE).

Belongs to the multi antimicrobial extrusion (MATE) (TC 2.A.66.1) family.

The protein resides in the vacuole membrane. This is an uncharacterized protein from Schizosaccharomyces pombe (strain 972 / ATCC 24843) (Fission yeast).